The chain runs to 278 residues: Probable NADP-dependent mannitol dehydrogenase (278 aa).

Isoleucine 45, asparagine 117, and lysine 152 together coordinate NADP(+). Catalysis depends on proton donor residues serine 171 and tyrosine 186. NADP(+) is bound by residues tyrosine 186, lysine 190, and threonine 220. Lysine 190 (lowers pKa of active site Tyr) is an active-site residue.

The protein belongs to the short-chain dehydrogenases/reductases (SDR) family. As to quaternary structure, homotetramer.

It catalyses the reaction D-mannitol + NADP(+) = D-fructose + NADPH + H(+). Functionally, versatile oxidoreductase that catalyzes the oxidation and reduction of polar as well as non-polar substrates at a very broad pH range. Preferentially oxidizes secondary alcohols. Has highest activity for racemic 2-heptanol and racemic octanol. Is also an efficient reductase for selected substrates. Substrate selectivity was found for medium chain length ketones with the carbonyl function at position C-2. Has highest activities for ribulose and fructose. The enzyme is (R)-selective in the reduction direction and produces exclusively the (R)-enantiomer. The sequence is that of Probable NADP-dependent mannitol dehydrogenase from Yarrowia lipolytica (strain CLIB 122 / E 150) (Yeast).